A 178-amino-acid polypeptide reads, in one-letter code: Major non-capsid protein (178 aa).

This sequence belongs to the tenuiviruses NCP family.

It is found in the host cytoplasm. Functionally, induces the formation of large intracellular inclusion body, organized in amorphous and crystalline arrays. Presumably the main cause of the stripe disease observed in host. The sequence is that of Major non-capsid protein from Rice stripe virus (isolate T) (RSV).